We begin with the raw amino-acid sequence, 138 residues long: Peptide methionine sulfoxide reductase MsrB (138 aa).

The region spanning 15–137 (EAEWRAQLDP…NSASLGFEPR (123 aa)) is the MsrB domain. Zn(2+) contacts are provided by Cys-54, Cys-57, Cys-103, and Cys-106. Cys-126 (nucleophile) is an active-site residue.

This sequence belongs to the MsrB Met sulfoxide reductase family. Requires Zn(2+) as cofactor.

It catalyses the reaction L-methionyl-[protein] + [thioredoxin]-disulfide + H2O = L-methionyl-(R)-S-oxide-[protein] + [thioredoxin]-dithiol. The sequence is that of Peptide methionine sulfoxide reductase MsrB from Methylibium petroleiphilum (strain ATCC BAA-1232 / LMG 22953 / PM1).